The sequence spans 294 residues: Nucleotide-binding protein CLL_A3342 (294 aa).

8–15 serves as a coordination point for ATP; that stretch reads GLSGAGKT. 59–62 is a GTP binding site; it reads DIRG.

Belongs to the RapZ-like family.

In terms of biological role, displays ATPase and GTPase activities. The protein is Nucleotide-binding protein CLL_A3342 of Clostridium botulinum (strain Eklund 17B / Type B).